We begin with the raw amino-acid sequence, 144 residues long: Large ribosomal subunit protein uL15 (144 aa).

Residues 1-53 (MRLNTLSPAEGSKHASKRLGRGIGSGLGKTGGRGHKGQKSRSGGGVRRGFEGG) are disordered. The span at 21–31 (RGIGSGLGKTG) shows a compositional bias: gly residues.

Belongs to the universal ribosomal protein uL15 family. In terms of assembly, part of the 50S ribosomal subunit.

Binds to the 23S rRNA. The sequence is that of Large ribosomal subunit protein uL15 from Edwardsiella ictaluri (strain 93-146).